The primary structure comprises 130 residues: Small ribosomal subunit protein uS12c (130 aa).

Belongs to the universal ribosomal protein uS12 family. Part of the 30S ribosomal subunit.

The protein resides in the plastid. It is found in the chloroplast. Its function is as follows. With S4 and S5 plays an important role in translational accuracy. Located at the interface of the 30S and 50S subunits. This chain is Small ribosomal subunit protein uS12c (rps12), found in Tetradesmus obliquus (Green alga).